The following is a 592-amino-acid chain: Proline--tRNA ligase (592 aa).

Belongs to the class-II aminoacyl-tRNA synthetase family. ProS type 1 subfamily. As to quaternary structure, homodimer.

The protein localises to the cytoplasm. It carries out the reaction tRNA(Pro) + L-proline + ATP = L-prolyl-tRNA(Pro) + AMP + diphosphate. Its function is as follows. Catalyzes the attachment of proline to tRNA(Pro) in a two-step reaction: proline is first activated by ATP to form Pro-AMP and then transferred to the acceptor end of tRNA(Pro). As ProRS can inadvertently accommodate and process non-cognate amino acids such as alanine and cysteine, to avoid such errors it has two additional distinct editing activities against alanine. One activity is designated as 'pretransfer' editing and involves the tRNA(Pro)-independent hydrolysis of activated Ala-AMP. The other activity is designated 'posttransfer' editing and involves deacylation of mischarged Ala-tRNA(Pro). The misacylated Cys-tRNA(Pro) is not edited by ProRS. This Corynebacterium urealyticum (strain ATCC 43042 / DSM 7109) protein is Proline--tRNA ligase.